Consider the following 446-residue polypeptide: Na(+)-translocating NADH-quinone reductase subunit A (446 aa).

This sequence belongs to the NqrA family. As to quaternary structure, composed of six subunits; NqrA, NqrB, NqrC, NqrD, NqrE and NqrF.

The catalysed reaction is a ubiquinone + n Na(+)(in) + NADH + H(+) = a ubiquinol + n Na(+)(out) + NAD(+). NQR complex catalyzes the reduction of ubiquinone-1 to ubiquinol by two successive reactions, coupled with the transport of Na(+) ions from the cytoplasm to the periplasm. NqrA to NqrE are probably involved in the second step, the conversion of ubisemiquinone to ubiquinol. The chain is Na(+)-translocating NADH-quinone reductase subunit A from Vibrio vulnificus (strain CMCP6).